The following is a 243-amino-acid chain: Protein unc-119 homolog B (243 aa).

Positions 1–21 are enriched in polar residues; that stretch reads MNSQSSRNETAATAVNGSDSA. The tract at residues 1–49 is disordered; sequence MNSQSSRNETAATAVNGSDSAAASRDHKSGGGVLKRLKSRRNQVDRRPV. Position 134 (Tyr134) interacts with tetradecanoate.

Belongs to the PDE6D/unc-119 family. In terms of tissue distribution, detected in embryo. Detected in larvae four days after fertilization, in retina and neural tissues (at protein level). Detected in embryos at the sphere stage, during gastrulation, somitogenesis and in swimming larvae, both within and outside of the developing nervous system. Detected in adults.

It is found in the cell projection. The protein localises to the cilium. Myristoyl-binding protein that acts as a cargo adapter: specifically binds the myristoyl moiety of a subset of N-terminally myristoylated proteins and is required for their localization. Plays a key role in localization of proteins to the primary cilium membrane. The sequence is that of Protein unc-119 homolog B (unc119b) from Danio rerio (Zebrafish).